We begin with the raw amino-acid sequence, 336 residues long: Protein FPV127 (336 aa).

A disordered region spans residues 1-22; that stretch reads MGGGLVLPTRDPPKEQDTSETA.

It belongs to the poxviruses A16/G9/J5 family.

The chain is Protein FPV127 from Vertebrata (FPV).